We begin with the raw amino-acid sequence, 205 residues long: Proteasome subunit beta type-3 (205 aa).

At Ser2 the chain carries N-acetylserine. Lys77 bears the N6-acetyllysine mark.

It belongs to the peptidase T1B family. The 26S proteasome consists of a 20S proteasome core and two 19S regulatory subunits. The 20S proteasome core is a barrel-shaped complex made of 28 subunits that are arranged in four stacked rings. The two outer rings are each formed by seven alpha subunits, and the two inner rings are formed by seven beta subunits. The proteolytic activity is exerted by three beta-subunits PSMB5, PSMB6 and PSMB7. As to quaternary structure, (Microbial infection) Interacts with HIV-1 TAT protein.

The protein localises to the cytoplasm. It is found in the nucleus. Its function is as follows. Non-catalytic component of the 20S core proteasome complex involved in the proteolytic degradation of most intracellular proteins. This complex plays numerous essential roles within the cell by associating with different regulatory particles. Associated with two 19S regulatory particles, forms the 26S proteasome and thus participates in the ATP-dependent degradation of ubiquitinated proteins. The 26S proteasome plays a key role in the maintenance of protein homeostasis by removing misfolded or damaged proteins that could impair cellular functions, and by removing proteins whose functions are no longer required. Associated with the PA200 or PA28, the 20S proteasome mediates ubiquitin-independent protein degradation. This type of proteolysis is required in several pathways including spermatogenesis (20S-PA200 complex) or generation of a subset of MHC class I-presented antigenic peptides (20S-PA28 complex). This Homo sapiens (Human) protein is Proteasome subunit beta type-3.